The sequence spans 195 residues: Probable GTP-binding protein EngB (195 aa).

The EngB-type G domain occupies 24 to 195 (DWPEIALAGR…EAWEAILRYL (172 aa)). Residues 32–39 (GRSNVGKS), 59–63 (GKTQL), 77–80 (DVPG), 144–147 (TKAD), and 176–178 (FSS) each bind GTP. Mg(2+)-binding residues include Ser39 and Thr61.

It belongs to the TRAFAC class TrmE-Era-EngA-EngB-Septin-like GTPase superfamily. EngB GTPase family. It depends on Mg(2+) as a cofactor.

Its function is as follows. Necessary for normal cell division and for the maintenance of normal septation. The protein is Probable GTP-binding protein EngB of Lactococcus lactis subsp. lactis (strain IL1403) (Streptococcus lactis).